The primary structure comprises 205 residues: CASP-like protein 2A1 (205 aa).

A disordered region spans residues 1-25 (MDKSKVSTAVGGETPVGLITGSRDD). The Cytoplasmic portion of the chain corresponds to 1–34 (MDKSKVSTAVGGETPVGLITGSRDDELESGSMRT). Residues 35-55 (AETVLRLVPMAFCISALVLML) traverse the membrane as a helical segment. At 56–76 (KNSQTNDFGTLSYSDLGAFRY) the chain is on the extracellular side. Residues 77 to 97 (LVHANGICAGYSLLSAIIVAM) traverse the membrane as a helical segment. At 98 to 105 (PRPSTMSR) the chain is on the cytoplasmic side. A helical membrane pass occupies residues 106–126 (AWTFFFLDQVLTYVILAAAAV). The Extracellular segment spans residues 127–156 (SVEALYLARKGDIAITWSAACVSFGGFCHK). Residues 157–177 (AITSAVITFIVVVCYALLSLV) form a helical membrane-spanning segment. Topologically, residues 178–205 (SSYKLFSRYGAPDVSYPGKGIEVAAFHS) are cytoplasmic.

The protein belongs to the Casparian strip membrane proteins (CASP) family. In terms of assembly, homodimer and heterodimers.

It localises to the cell membrane. The protein is CASP-like protein 2A1 of Ricinus communis (Castor bean).